A 163-amino-acid chain; its full sequence is Small ribosomal subunit protein uS3m (163 aa).

Residues Met-1–Leu-31 constitute a mitochondrion transit peptide.

Belongs to the universal ribosomal protein uS3 family. Component of the mitochondrial ribosome small subunit (28S) which comprises a 12S rRNA and about 30 distinct proteins.

Its subcellular location is the mitochondrion. This Danio rerio (Zebrafish) protein is Small ribosomal subunit protein uS3m (mrps24).